The primary structure comprises 117 residues: Mitochondrial import inner membrane translocase subunit Tim10B (117 aa).

The Twin CX3C motif motif lies at 22-46 (CFSRCVDNLSQRDLGGHEDLCVDRC). Disulfide bonds link Cys-22/Cys-46 and Cys-26/Cys-42. Over residues 75–97 (EMEENARKAEQQQREQEKERLKE) the composition is skewed to basic and acidic residues. The disordered stretch occupies residues 75–117 (EMEENARKAEQQQREQEKERLKEAAATAVLTPVQPPVAGNLSM).

Belongs to the small Tim family. As to quaternary structure, component of the TIM22 complex, whose core is composed of Tim22, associated with peripheral protein Tim9b/Tim10b and the 70 kDa heterohexamer. In most cases, the 70 kDa complex is composed of TIMM9 and TIMM10.

Its subcellular location is the mitochondrion inner membrane. Functionally, component of the TIM22 complex, a complex that mediates the import and insertion of multi-pass transmembrane proteins into the mitochondrial inner membrane. The TIM22 complex forms a twin-pore translocase that uses the membrane potential as the external driving force. In the TIM22 complex, it may act as a docking point for the soluble 70 kDa complex that guides the target proteins in transit through the aqueous mitochondrial intermembrane space. In Drosophila melanogaster (Fruit fly), this protein is Mitochondrial import inner membrane translocase subunit Tim10B (Tim9b).